We begin with the raw amino-acid sequence, 1541 residues long: ATP-binding cassette sub-family C member 2 (1541 aa).

At 1 to 26 (MDKFCNSTFWDLSLLESPEADLPLCF) the chain is on the extracellular side. The N-linked (GlcNAc...) asparagine glycan is linked to Asn6. Residues 27 to 47 (EQTVLVWIPLGFLWLLAPWQL) traverse the membrane as a helical segment. At 48 to 67 (YSVYRSRTKRSSITKFYLAK) the chain is on the cytoplasmic side. The chain crosses the membrane as a helical span at residues 68–88 (QVFVVFLLILAAIDLSLALTE). The Extracellular segment spans residues 89-92 (DTGQ). The helical transmembrane segment at 93–113 (ATVPPVRYTNPILYLCTWLLV) threads the bilayer. At 114-125 (LAVQHSRQWCVR) the chain is on the cytoplasmic side. The helical transmembrane segment at 126 to 146 (KNSWFLSLFWILSVLCGVFQF) threads the bilayer. At 147 to 164 (QTLIRALLKDSKSNMAYS) the chain is on the extracellular side. The helical transmembrane segment at 165–185 (YLFFVSYGFQIVLLILTAFSG) threads the bilayer. Over 186 to 309 (PSDSTQTPSV…DYPKSWLIKS (124 aa)) the chain is Cytoplasmic. Ser279 and Ser281 each carry phosphoserine. A helical membrane pass occupies residues 310–330 (LFKTFHVVILKSFILKLIHDL). The region spanning 318-601 (ILKSFILKLI…LPMVTSSILQ (284 aa)) is the ABC transmembrane type-1 1 domain. Residues 331–356 (LVFLNPQLLKLLIGFVKSSNSYVWFG) are Extracellular-facing. Residues 357 to 377 (YICAILMFAVTLIQSFCLQSY) form a helical membrane-spanning segment. Topologically, residues 378 to 433 (FQHCFVLGMCVRTTVMSSIYKKALTLSNLARKQYTIGETVNLMSVDSQKLMDATNY) are cytoplasmic. A helical transmembrane segment spans residues 434–454 (MQLVWSSVIQITLSIFFLWRE). Residues 455 to 457 (LGP) lie on the Extracellular side of the membrane. A helical transmembrane segment spans residues 458 to 478 (SILAGVGVMVLLIPVNGVLAT). The Cytoplasmic segment spans residues 479–540 (KIRNIQVQNM…NLLRFGQLQS (62 aa)). A helical transmembrane segment spans residues 541 to 561 (LLIFILQITPILVSVVTFSVY). Residues 562 to 583 (VLVDSANVLNAEKAFTSITLFN) lie on the Extracellular side of the membrane. A helical membrane pass occupies residues 584-604 (ILRFPLSMLPMVTSSILQASV). The Cytoplasmic segment spans residues 605–967 (SVDRLERYLG…VKFSIYLKYL (363 aa)). The region spanning 633 to 857 (VKFSEASFTW…KGVFARNWKT (225 aa)) is the ABC transporter 1 domain. Residue 667 to 674 (GTVGSGKS) coordinates ATP. Disordered stretches follow at residues 862 to 881 (SGPE…DDDD) and 901 to 923 (RENS…GKSL). Ser874 bears the Phosphoserine mark. Residues 906–915 (RRTLSRSSRS) are compositionally biased toward low complexity. 2 positions are modified to phosphoserine: Ser922 and Ser926. A helical membrane pass occupies residues 968 to 988 (QAVGWWSILFIILFYGLNNVA). Positions 975–1260 (ILFIILFYGL…LVRMTSEAET (286 aa)) constitute an ABC transmembrane type-1 2 domain. At 989 to 1029 (FIGSNLWLSAWTSDSDNLNGTNNSSSHRDMRIGVFGALGLA) the chain is on the extracellular side. Residues Asn1007, Asn1010, and Asn1011 are each glycosylated (N-linked (GlcNAc...) asparagine). A helical membrane pass occupies residues 1030–1050 (QGICLLISTLWSIYACRNASK). The Cytoplasmic portion of the chain corresponds to 1051 to 1093 (ALHGQLLTNILRAPMRFFDTTPTGRIVNRFSGDISTVDDLLPQ). The chain crosses the membrane as a helical span at residues 1094–1114 (TLRSWMMCFFGIAGTLVMICM). Ala1115 is a topological domain (extracellular). The chain crosses the membrane as a helical span at residues 1116–1136 (TPVFAIIIIPLSILYISVQVF). Over 1137–1207 (YVATSRQLRR…TSNRWLAIRL (71 aa)) the chain is Cytoplasmic. The helical transmembrane segment at 1208-1228 (ELVGNLVVFCSALLLVIYRKT) threads the bilayer. The Extracellular segment spans residues 1229–1230 (LT). Residues 1231-1251 (GDVVGFVLSNALNITQTLNWL) traverse the membrane as a helical segment. The Cytoplasmic portion of the chain corresponds to 1252–1541 (VRMTSEAETN…GIENVNHTEL (290 aa)). The region spanning 1296–1530 (IQFNNYQVRY…RGSFYLMAKE (235 aa)) is the ABC transporter 2 domain. 1330–1337 (GRTGAGKS) lines the ATP pocket. Residue Ser1434 is modified to Phosphoserine.

It belongs to the ABC transporter superfamily. ABCC family. Conjugate transporter (TC 3.A.1.208) subfamily. As to expression, mainly expressed in the liver.

The protein localises to the apical cell membrane. The catalysed reaction is an S-substituted glutathione(in) + ATP + H2O = an S-substituted glutathione(out) + ADP + phosphate + H(+). The enzyme catalyses taurolithocholate 3-sulfate(in) + ATP + H2O = taurolithocholate 3-sulfate(out) + ADP + phosphate + H(+). It carries out the reaction ATP + H2O + xenobioticSide 1 = ADP + phosphate + xenobioticSide 2.. It catalyses the reaction 17beta-estradiol 17-O-(beta-D-glucuronate)(in) + ATP + H2O = 17beta-estradiol 17-O-(beta-D-glucuronate)(out) + ADP + phosphate + H(+). The catalysed reaction is leukotriene C4(in) + ATP + H2O = leukotriene C4(out) + ADP + phosphate + H(+). The enzyme catalyses (4Z,15Z)-bilirubin IXalpha C8-beta-D-glucuronoside(in) + ATP + H2O = (4Z,15Z)-bilirubin IXalpha C8-beta-D-glucuronoside(out) + ADP + phosphate + H(+). It carries out the reaction (4Z,15Z)-bilirubin IXalpha C8,C12-beta-D-bisglucuronoside(in) + ATP + H2O = (4Z,15Z)-bilirubin IXalpha C8,C12-beta-D-bisglucuronoside(out) + ADP + phosphate + H(+). Its function is as follows. ATP-dependent transporter of the ATP-binding cassette (ABC) family that binds and hydrolyzes ATP to enable active transport of various substrates including many drugs, toxicants and endogenous compound across cell membranes. Transports a wide variety of conjugated organic anions such as sulfate-, glucuronide- and glutathione (GSH)-conjugates of endo- and xenobiotics substrates. Mediates hepatobiliary excretion of mono- and bis-glucuronidated bilirubin molecules and therefore play an important role in bilirubin detoxification. Also mediates hepatobiliary excretion of others glucuronide conjugates such as 17beta-estradiol 17-glucosiduronic acid and leukotriene C4. Transports sulfated bile salt such as taurolithocholate sulfate. Transports various anticancer drugs, such as anthracycline, vinca alkaloid and methotrexate and HIV-drugs such as protease inhibitors. The polypeptide is ATP-binding cassette sub-family C member 2 (Rattus norvegicus (Rat)).